A 209-amino-acid chain; its full sequence is NAD(P)H-quinone oxidoreductase subunit I (209 aa).

2 consecutive 4Fe-4S ferredoxin-type domains span residues 55–84 and 95–124; these read GRIHFERPKCISCEVCVRVCPINLPVVDYE and NSYSIDFGVCIFCGNCVEYCPTSCLSMTEE. 8 residues coordinate [4Fe-4S] cluster: C64, C67, C70, C74, C104, C107, C110, and C114.

The protein belongs to the complex I 23 kDa subunit family. As to quaternary structure, NDH-1 is composed of at least 11 different subunits. Requires [4Fe-4S] cluster as cofactor.

It is found in the cell inner membrane. It carries out the reaction a plastoquinone + NADH + (n+1) H(+)(in) = a plastoquinol + NAD(+) + n H(+)(out). The catalysed reaction is a plastoquinone + NADPH + (n+1) H(+)(in) = a plastoquinol + NADP(+) + n H(+)(out). In terms of biological role, NDH-1 shuttles electrons from an unknown electron donor, via FMN and iron-sulfur (Fe-S) centers, to quinones in the respiratory and/or the photosynthetic chain. The immediate electron acceptor for the enzyme in this species is believed to be plastoquinone. Couples the redox reaction to proton translocation, and thus conserves the redox energy in a proton gradient. The sequence is that of NAD(P)H-quinone oxidoreductase subunit I from Gloeobacter violaceus (strain ATCC 29082 / PCC 7421).